A 221-amino-acid chain; its full sequence is MSDGDYDYLIKFLALGDSGVGKTSVLYQYTDGKFNSKFITTVGIDFREKRVVYRASGPDGATGRGQRIHLQLWDTAGQERFRSLTTAFFRDAMGFLLLFDLTNEQSFLNVRNWISQLQMHAYCENPDIVLCGNKSDLEDQRVVKEEEAIALAEKYGIPYFETSAANGTNISQAIEMLLDLIMKRMERCVDKSWIPEGVVRSNGHASTDQLSEEKEKGACGC.

Serine 2 carries the post-translational modification N-acetylserine. The residue at position 2 (serine 2) is a Phosphoserine. 16 to 24 (GDSGVGKTS) serves as a coordination point for GTP. The short motif at 38–46 (FITTVGIDF) is the Effector region element. Residues 74-78 (DTAGQ), 133-136 (NKSD), and 163-165 (SAA) contribute to the GTP site. A disulfide bridge links cysteine 123 with cysteine 188. 2 S-geranylgeranyl cysteine lipidation sites follow: cysteine 219 and cysteine 221. Cysteine 221 bears the Cysteine methyl ester mark.

It belongs to the small GTPase superfamily. Rab family. Binds SYTL1, SLAC2B, MYRIP, SYTL3, SYTL4 and SYTL5. Interacts with RPH3A and RPH3A. Binds MLPH and SYTL2. Interacts with UNC13D. Does not interact with the BLOC-3 complex (heterodimer of HPS1 and HPS4). Interacts (GDP-bound form preferentially) with DENND10. Found in all the examined tissues except in brain. Low expression was found in thymus, kidney, muscle and placenta. Detected in melanocytes, and in most tumor cell lines examined. Expressed in cytotoxic T-lymphocytes (CTL) and mast cells.

The protein localises to the membrane. The protein resides in the melanosome. It localises to the late endosome. It is found in the lysosome. It carries out the reaction GTP + H2O = GDP + phosphate + H(+). With respect to regulation, regulated by guanine nucleotide exchange factors (GEFs) which promote the exchange of bound GDP for free GTP, GTPase activating proteins (GAPs) which increase the GTP hydrolysis activity, and GDP dissociation inhibitors which inhibit the dissociation of the nucleotide from the GTPase. Activated by GEFs such as DENND10. Functionally, small GTPase which cycles between active GTP-bound and inactive GDP-bound states. In its active state, binds to a variety of effector proteins to regulate homeostasis of late endocytic pathway, including endosomal positioning, maturation and secretion. Plays a role in cytotoxic granule exocytosis in lymphocytes. Required for both granule maturation and granule docking and priming at the immunologic synapse. The chain is Ras-related protein Rab-27A (RAB27A) from Homo sapiens (Human).